Here is a 315-residue protein sequence, read N- to C-terminus: Acetyl-coenzyme A carboxylase carboxyl transferase subunit alpha (315 aa).

Positions Leu-36–Val-289 constitute a CoA carboxyltransferase C-terminal domain.

It belongs to the AccA family. In terms of assembly, acetyl-CoA carboxylase is a heterohexamer composed of biotin carboxyl carrier protein (AccB), biotin carboxylase (AccC) and two subunits each of ACCase subunit alpha (AccA) and ACCase subunit beta (AccD).

It is found in the cytoplasm. It catalyses the reaction N(6)-carboxybiotinyl-L-lysyl-[protein] + acetyl-CoA = N(6)-biotinyl-L-lysyl-[protein] + malonyl-CoA. The protein operates within lipid metabolism; malonyl-CoA biosynthesis; malonyl-CoA from acetyl-CoA: step 1/1. Its function is as follows. Component of the acetyl coenzyme A carboxylase (ACC) complex. First, biotin carboxylase catalyzes the carboxylation of biotin on its carrier protein (BCCP) and then the CO(2) group is transferred by the carboxyltransferase to acetyl-CoA to form malonyl-CoA. This Francisella philomiragia subsp. philomiragia (strain ATCC 25017 / CCUG 19701 / FSC 153 / O#319-036) protein is Acetyl-coenzyme A carboxylase carboxyl transferase subunit alpha.